A 508-amino-acid chain; its full sequence is Maturase K (508 aa).

Belongs to the intron maturase 2 family. MatK subfamily.

It is found in the plastid. Its subcellular location is the chloroplast. In terms of biological role, usually encoded in the trnK tRNA gene intron. Probably assists in splicing its own and other chloroplast group II introns. This Ranunculus lingua (Greater spearwort) protein is Maturase K.